Consider the following 76-residue polypeptide: Small ribosomal subunit protein bS18 (76 aa).

Belongs to the bacterial ribosomal protein bS18 family. In terms of assembly, part of the 30S ribosomal subunit. Forms a tight heterodimer with protein bS6.

Functionally, binds as a heterodimer with protein bS6 to the central domain of the 16S rRNA, where it helps stabilize the platform of the 30S subunit. The sequence is that of Small ribosomal subunit protein bS18 from Pelotomaculum thermopropionicum (strain DSM 13744 / JCM 10971 / SI).